The following is a 554-amino-acid chain: uncharacterized protein (554 aa).

Disordered regions lie at residues Met1–Asp127, Ile139–Gly173, Asn293–Glu395, and Phe416–Arg509. Composition is skewed to low complexity over residues Ser9–Ile30, Asp46–Asn55, and Ser63–Tyr125. The segment covering Ile139–Ser153 has biased composition (acidic residues). Residues Asn164–Gly173 are compositionally biased toward polar residues. Low complexity-rich tracts occupy residues Asn293–Asn387, Phe416–Ser449, and Ser461–His484. The span at His485–Ile508 shows a compositional bias: basic residues.

This is an uncharacterized protein from Dictyostelium discoideum (Social amoeba).